Consider the following 417-residue polypeptide: D-amino acid dehydrogenase (417 aa).

FAD is bound at residue 3–17 (VIVLGSGVIGVTAAW).

Belongs to the DadA oxidoreductase family. FAD serves as cofactor.

It catalyses the reaction a D-alpha-amino acid + A + H2O = a 2-oxocarboxylate + AH2 + NH4(+). It functions in the pathway amino-acid degradation; D-alanine degradation; NH(3) and pyruvate from D-alanine: step 1/1. Its function is as follows. Oxidative deamination of D-amino acids. The sequence is that of D-amino acid dehydrogenase from Methylobacillus flagellatus (strain ATCC 51484 / DSM 6875 / VKM B-1610 / KT).